A 34-amino-acid chain; its full sequence is Potassium channel toxin alpha-KTx 18.2 (34 aa).

3 disulfides stabilise this stretch: C7-C26, C12-C31, and C16-C33.

As to expression, expressed by the venom gland.

It localises to the secreted. In terms of biological role, reversibly blocks Shaker B potassium channels. This chain is Potassium channel toxin alpha-KTx 18.2, found in Tityus discrepans (Venezuelan scorpion).